Consider the following 1101-residue polypeptide: Rho GTPase-activating protein 30 (1101 aa).

Residues 20 to 215 (CDLQEHLQHS…FILTHVDQLF (196 aa)) form the Rho-GAP domain. Disordered stretches follow at residues 224-243 (EVESGWRSLPGTRASGSPED), 300-400 (HETK…RAGG), and 451-529 (ALQH…AEDG). Basic and acidic residues predominate over residues 308 to 318 (RGAEDREDKSN). The segment covering 360–376 (LENDSIEAAEGEQEPEA) has biased composition (acidic residues). The span at 459–472 (ASGPGPGPGLGPGP) shows a compositional bias: pro residues. Over residues 508–520 (DSFSFLEDSSSSE) the composition is skewed to low complexity. At S576 the chain carries Phosphoserine. Disordered regions lie at residues 621–906 (GPKP…QPSP) and 965–991 (CPRPGRLDGTPGERAWGSRASRSSWRN). 4 stretches are compositionally biased toward basic and acidic residues: residues 658-694 (GEDKQAEPGGRLDIREEAEGSPETKVEAGKASEDRGE), 701-735 (TKVRLREGSREETEAKEEKSKGQKKADSMEAKGVE), 759-770 (EEAQVEAGRDLE), and 779-822 (AEEK…DSRS). The segment covering 976–991 (GERAWGSRASRSSWRN) has biased composition (low complexity). S996 bears the Phosphoserine mark. The disordered stretch occupies residues 1050 to 1101 (LELPSEGAEGSGSRSRLSLPPREPQVPDPLLSSQRRSYAFETQANPGKGEGL). The span at 1053–1069 (PSEGAEGSGSRSRLSLP) shows a compositional bias: low complexity. Residues 1080–1094 (LSSQRRSYAFETQAN) are compositionally biased toward polar residues.

Interacts with RHOU in a GTP-independent manner.

It is found in the cytoplasmic vesicle. Functionally, GTPase-activating protein (GAP) for RAC1 and RHOA, but not for CDC42. The polypeptide is Rho GTPase-activating protein 30 (ARHGAP30) (Homo sapiens (Human)).